Consider the following 71-residue polypeptide: Prophage lysis protein S homolog EssD (71 aa).

It belongs to the lambda phage S protein family.

This is Prophage lysis protein S homolog EssD (essD) from Escherichia coli (strain K12).